Reading from the N-terminus, the 625-residue chain is MASPDKKSSLAALTLAAVGIVYGDIGTSPLYTMKEVFSKEHGLDLTPENLLGVVSLIVWGLIIIVSLKYVTLVLRANNRGEGGIMALMALALSSVTKNSRWYFPLMVMGLFGATLFYGDSVITPAISVLSAVEGLGVATSAFDPYVVPVTVAILVGLYSLQARGTAGIGKWFGPVMLIWFITLAVMGVVNIIDAPYILHALNPWHALHFLSGNGFLAFIALGAVVLAFTGAEALYADMGHFGAKPIRMAWFLIAFPALSLNYLGQGALLLLNPEAVTNPFYQQLGAWSIYPLVALSTMAAIIASQATISGTFSMTKQAIALGFLPRMKIEFTSASQIGQIYIPAVNWLQMIVVVLAVIGFGSSSNLAAAYGIAVTATMMVTTVLTFFVIRYRWKYNLILCVAATGFFLVIDLSLFSANMLKLFHGGWFPLLLGVVLFTLMLTWKRGRELVFENLQKHAIPLEDFLASLFISPPTRVPGTAIFLRGESDGVPHAMLHNLSHNKVLHERVVFLTVRMMEVPYVPKADQVRIEHLGDDCYQMNVTYGFKNVPDIPAALDLAKEQGLEFEMMETSFFIARQTVVANPVRGMALWREHIFVAMSRHARGAADYYQIPSNRVIELGTKVEI.

12 helical membrane passes run 10–30 (LAALTLAAVGIVYGDIGTSPL), 50–70 (LLGVVSLIVWGLIIIVSLKYV), 102–122 (YFPLMVMGLFGATLFYGDSVI), 135–155 (LGVATSAFDPYVVPVTVAILV), 172–192 (FGPVMLIWFITLAVMGVVNII), 214–234 (GFLAFIALGAVVLAFTGAEAL), 251–271 (FLIAFPALSLNYLGQGALLLL), 284–304 (LGAWSIYPLVALSTMAAIIAS), 340–360 (IYIPAVNWLQMIVVVLAVIGF), 369–389 (AYGIAVTATMMVTTVLTFFVI), 397–417 (LILCVAATGFFLVIDLSLFSA), and 422–442 (LFHGGWFPLLLGVVLFTLMLT).

This sequence belongs to the HAK/KUP transporter (TC 2.A.72) family.

It localises to the cell inner membrane. The enzyme catalyses K(+)(in) + H(+)(in) = K(+)(out) + H(+)(out). Its function is as follows. Transport of potassium into the cell. Likely operates as a K(+):H(+) symporter. The protein is Probable potassium transport system protein Kup of Herminiimonas arsenicoxydans.